A 338-amino-acid polypeptide reads, in one-letter code: Anthranilate phosphoribosyltransferase (338 aa).

5-phospho-alpha-D-ribose 1-diphosphate is bound by residues Gly-81, 84–85 (GD), Thr-89, 91–94 (NIST), 109–117 (KHGNRNLSS), and Ala-121. Gly-81 is an anthranilate binding site. Residue Ser-93 coordinates Mg(2+). Asn-112 contributes to the anthranilate binding site. Arg-167 contacts anthranilate. Positions 226 and 227 each coordinate Mg(2+).

Belongs to the anthranilate phosphoribosyltransferase family. Homodimer. The cofactor is Mg(2+).

The enzyme catalyses N-(5-phospho-beta-D-ribosyl)anthranilate + diphosphate = 5-phospho-alpha-D-ribose 1-diphosphate + anthranilate. Its pathway is amino-acid biosynthesis; L-tryptophan biosynthesis; L-tryptophan from chorismate: step 2/5. Catalyzes the transfer of the phosphoribosyl group of 5-phosphorylribose-1-pyrophosphate (PRPP) to anthranilate to yield N-(5'-phosphoribosyl)-anthranilate (PRA). The chain is Anthranilate phosphoribosyltransferase from Cereibacter sphaeroides (strain ATCC 17029 / ATH 2.4.9) (Rhodobacter sphaeroides).